A 282-amino-acid polypeptide reads, in one-letter code: Probable aquaporin PIP2-6 (282 aa).

2 helical membrane-spanning segments follow: residues 39 to 59 (ALIA…ATVI) and 76 to 96 (LGIA…TAGI). Residues 102–104 (NPA) carry the NPA 1 motif. A run of 3 helical transmembrane segments spans residues 121–141 (VMYI…VKGI), 163–183 (GTAL…VFSA), and 197–217 (VLAP…TIPI). The short motif at 223 to 225 (NPA) is the NPA 2 element. A helical transmembrane segment spans residues 245 to 265 (IFWAGPFIGALAAAAYHQYIL).

It belongs to the MIP/aquaporin (TC 1.A.8) family. PIP (TC 1.A.8.11) subfamily. Expressed in roots and leaves.

It localises to the cell membrane. Functionally, aquaporins facilitate the transport of water and small neutral solutes across cell membranes. The protein is Probable aquaporin PIP2-6 (PIP2-6) of Oryza sativa subsp. japonica (Rice).